The sequence spans 360 residues: MLVWLAEHLVKYYSGFNVFSYLTFRAIVSLLTALFISLWMGPRMIARLQKLAFGQVVRNDGPESHFSKRGTPTMGGIMILTAITVSVLLWAYPSNPYVWCVLTVLIGYGIIGFVDDYRKVVRKDTKGLIARWKYFWMSVIALGVAFALYLAGKDTPATELVVPFFKDVMPQLGLFYILLAYFVIVGTGNAVNLTDGLDGLAIMPTVFVAAGFALVAWATGNMNFANYLHIPYLRHAGELVIVCTAIVGAGLGFLWFNTYPAQVFMGDVGSLALGGALGIIAVLLRQEFLLVIMGGVFVVETLSVILQVGSFKLRGQRIFRMAPIHHHYELKGWPEPRVIVRFWIISLMLVLIGLATLKVR.

The next 10 membrane-spanning stretches (helical) occupy residues 26–46 (AIVSLLTALFISLWMGPRMIA), 72–92 (PTMGGIMILTAITVSVLLWAY), 94–114 (SNPYVWCVLTVLIGYGIIGFV), 132–152 (WKYFWMSVIALGVAFALYLAG), 168–188 (VMPQLGLFYILLAYFVIVGTG), 199–219 (GLAIMPTVFVAAGFALVAWAT), 236–256 (AGELVIVCTAIVGAGLGFLWF), 263–283 (VFMGDVGSLALGGALGIIAVL), 288–308 (FLLVIMGGVFVVETLSVILQV), and 338–358 (VIVRFWIISLMLVLIGLATLK).

The protein belongs to the glycosyltransferase 4 family. MraY subfamily. Requires Mg(2+) as cofactor.

The protein resides in the cell inner membrane. The catalysed reaction is UDP-N-acetyl-alpha-D-muramoyl-L-alanyl-gamma-D-glutamyl-meso-2,6-diaminopimeloyl-D-alanyl-D-alanine + di-trans,octa-cis-undecaprenyl phosphate = di-trans,octa-cis-undecaprenyl diphospho-N-acetyl-alpha-D-muramoyl-L-alanyl-D-glutamyl-meso-2,6-diaminopimeloyl-D-alanyl-D-alanine + UMP. It participates in cell wall biogenesis; peptidoglycan biosynthesis. Its function is as follows. Catalyzes the initial step of the lipid cycle reactions in the biosynthesis of the cell wall peptidoglycan: transfers peptidoglycan precursor phospho-MurNAc-pentapeptide from UDP-MurNAc-pentapeptide onto the lipid carrier undecaprenyl phosphate, yielding undecaprenyl-pyrophosphoryl-MurNAc-pentapeptide, known as lipid I. This is Phospho-N-acetylmuramoyl-pentapeptide-transferase from Klebsiella pneumoniae subsp. pneumoniae (strain ATCC 700721 / MGH 78578).